The following is a 91-amino-acid chain: Small ribosomal subunit protein bS18 (91 aa).

It belongs to the bacterial ribosomal protein bS18 family. In terms of assembly, part of the 30S ribosomal subunit. Forms a tight heterodimer with protein bS6.

Its function is as follows. Binds as a heterodimer with protein bS6 to the central domain of the 16S rRNA, where it helps stabilize the platform of the 30S subunit. The chain is Small ribosomal subunit protein bS18 from Wolbachia pipientis wMel.